The primary structure comprises 245 residues: Brasilane terpene glycosides biosynthesis cluster protein D (245 aa).

C3H1-type zinc fingers lie at residues 121-152 (KELK…HDNV) and 161-185 (ICHF…HYPA). Residues 186–245 (PHRVTAPMPSKKKSKKLRSSVADDASHPDLGKARRHDPRDDEQNDEVWRNQGRARPGQEW) are disordered. The segment covering 209-226 (DASHPDLGKARRHDPRDD) has biased composition (basic and acidic residues).

In terms of biological role, part of the gene cluster that mediates the biosynthesis of the brasilane terpene glycosides brasilane D and E. The biosynthesis starts with the activity of the terpene cyclase braA that converts farnesyl pyrophosphate into the sesquiterpene alcohol trichobrasilenol. Subsequently, trichobrasilenol is glycosylated by the O-glycosyltransferase braB putatively using UDP-GlcNAc as sugar donor to yield brasilane A. The latter then undergoes two rounds of oxidation performed by the cytochrome P450 monooxygenase braC. In the first round braC hydroxylates C-12 forming brasilane D, which serves as substrate in the second round to establish the epoxide at the bond between C-5 and C-10 and oxidize the alcohol at C-12 to an aldehyde leading to the final product brasilane E. The protein is Brasilane terpene glycosides biosynthesis cluster protein D of Annulohypoxylon truncatum (Hypoxylon truncatum).